A 659-amino-acid chain; its full sequence is Protein SCARECROW 1 (659 aa).

Disordered stretches follow at residues 1 to 33 (MGSSSLLLFPSSSSSATHSSYSPSSSSHAITSL) and 188 to 285 (SDPA…KQRD). Pro residues predominate over residues 190–228 (PAPPPPPPPSHPALLPPDATAPPPPPTSVAALPPPPPPQ). Low complexity predominate over residues 258-271 (AAAAAAAAAAALAA). Residues 258 to 289 (AAAAAAAAAAALAAAKERKEEQRRKQRDEEGL) are a coiled coil. A compositionally biased stretch (basic and acidic residues) spans 272-285 (AKERKEEQRRKQRD). A GRAS domain is found at 282–652 (KQRDEEGLHL…LCLLTASAWR (371 aa)). The leucine repeat I (LRI) stretch occupies residues 289-353 (LHLLTLLLQC…VSSCLGLYAP (65 aa)). The LxCxE motif signature appears at 296 to 300 (LQCAE). Residues 372-437 (FQVFNGISPF…GGPPRVRLTG (66 aa)) form a VHIID region. Positions 403–407 (VHIID) match the VHIID motif. The segment at 447–479 (ATGKRLSDFADTLGLPFEFCPVADKAGNLDPEK) is leucine repeat II (LRII). Residues 488 to 575 (VAVHWLRHSL…QQLLSREIRN (88 aa)) are PFYRE. Residues 578-652 (AVGGPARTGD…LCLLTASAWR (75 aa)) are SAW.

Belongs to the GRAS family. In terms of assembly, interacts with SHR1, but not with SHR2.

It is found in the nucleus. Functionally, transcription factor required for quiescent center cells specification and maintenance of surrounding stem cells, and for the asymmetric cell division involved in radial pattern formation in roots. Essential for cell division but not differentiation of the ground tissue. Regulates the radial organization of the shoot axial organs. Restricts SHR movment and sequesters it into the nucleus of the endodermis. The protein is Protein SCARECROW 1 (SCR1) of Oryza sativa subsp. indica (Rice).